A 308-amino-acid chain; its full sequence is Ribonuclease HIII (308 aa).

One can recognise an RNase H type-2 domain in the interval 91 to 308; sequence KNVIGSDEVG…TEKALKMVKK (218 aa). The a divalent metal cation site is built by aspartate 97, glutamate 98, and aspartate 202.

It belongs to the RNase HII family. RnhC subfamily. The cofactor is Mn(2+). Mg(2+) serves as cofactor.

The protein resides in the cytoplasm. The catalysed reaction is Endonucleolytic cleavage to 5'-phosphomonoester.. In terms of biological role, endonuclease that specifically degrades the RNA of RNA-DNA hybrids. In Listeria monocytogenes serovar 1/2a (strain ATCC BAA-679 / EGD-e), this protein is Ribonuclease HIII.